Here is a 516-residue protein sequence, read N- to C-terminus: NADH-quinone oxidoreductase subunit N (516 aa).

The next 14 helical transmembrane spans lie at 12–32 (LLPAYLAAGTAVLVLLADLLV), 37–57 (VTISVAALGALATAAGAVLVG), 81–101 (LVAVLVALLTLGVLGLSGPLL), 108–128 (VGEYCFLLAASMTGGVALGAA), 131–151 (LITLIVALETLTLPLYVLVGL), 163–183 (VTFFVVSVVATTLTLLGAALL), 213–233 (VAVALVVVGLTVKVAAVPFHA), 246–266 (VAAYLSTVSKLGGVVALLAVV), 274–294 (ITGLVLALLAVLTMTVGNLVA), 303–323 (LLAWSSVAQAGYILAPLGALA), 341–361 (VAYTVFFVVLELAAFAAVVAL), 386–406 (VGLALALVGLAGLPPGLAGLF), 419–439 (GAAGLALVVAVNAVLGLAYYL), and 491–511 (VVLAAATVVALVVGFAPQLVL).

This sequence belongs to the complex I subunit 2 family. In terms of assembly, NDH-1 is composed of 14 different subunits. Subunits NuoA, H, J, K, L, M, N constitute the membrane sector of the complex.

Its subcellular location is the cell membrane. The catalysed reaction is a quinone + NADH + 5 H(+)(in) = a quinol + NAD(+) + 4 H(+)(out). Functionally, NDH-1 shuttles electrons from NADH, via FMN and iron-sulfur (Fe-S) centers, to quinones in the respiratory chain. The immediate electron acceptor for the enzyme in this species is believed to be a menaquinone. Couples the redox reaction to proton translocation (for every two electrons transferred, four hydrogen ions are translocated across the cytoplasmic membrane), and thus conserves the redox energy in a proton gradient. In Salinispora tropica (strain ATCC BAA-916 / DSM 44818 / JCM 13857 / NBRC 105044 / CNB-440), this protein is NADH-quinone oxidoreductase subunit N.